The following is a 483-amino-acid chain: Glycogen synthase (483 aa).

Lys15 lines the ADP-alpha-D-glucose pocket.

Belongs to the glycosyltransferase 1 family. Bacterial/plant glycogen synthase subfamily.

The catalysed reaction is [(1-&gt;4)-alpha-D-glucosyl](n) + ADP-alpha-D-glucose = [(1-&gt;4)-alpha-D-glucosyl](n+1) + ADP + H(+). Its pathway is glycan biosynthesis; glycogen biosynthesis. In terms of biological role, synthesizes alpha-1,4-glucan chains using ADP-glucose. In Exiguobacterium sibiricum (strain DSM 17290 / CCUG 55495 / CIP 109462 / JCM 13490 / 255-15), this protein is Glycogen synthase.